The primary structure comprises 295 residues: Shikimate dehydrogenase (NADP(+)) (295 aa).

Shikimate-binding positions include 24–26 (SRS) and Thr71. Catalysis depends on Lys75, which acts as the Proton acceptor. Residue Glu87 participates in NADP(+) binding. Shikimate is bound by residues Asn96 and Asp111. Residues 136–140 (GAGGA), 160–165 (NRTASR), and Met233 contribute to the NADP(+) site. Shikimate is bound at residue Tyr235. Position 256 (Gly256) interacts with NADP(+).

It belongs to the shikimate dehydrogenase family. Homodimer.

It carries out the reaction shikimate + NADP(+) = 3-dehydroshikimate + NADPH + H(+). It functions in the pathway metabolic intermediate biosynthesis; chorismate biosynthesis; chorismate from D-erythrose 4-phosphate and phosphoenolpyruvate: step 4/7. Involved in the biosynthesis of the chorismate, which leads to the biosynthesis of aromatic amino acids. Catalyzes the reversible NADPH linked reduction of 3-dehydroshikimate (DHSA) to yield shikimate (SA). This is Shikimate dehydrogenase (NADP(+)) from Cupriavidus necator (strain ATCC 17699 / DSM 428 / KCTC 22496 / NCIMB 10442 / H16 / Stanier 337) (Ralstonia eutropha).